The following is a 263-amino-acid chain: 4-hydroxy-tetrahydrodipicolinate reductase (263 aa).

NAD(+) contacts are provided by residues 7-12 (GFKGRM), 96-98 (GTT), and 122-125 (APNF). Catalysis depends on His152, which acts as the Proton donor/acceptor. Residue His153 participates in (S)-2,3,4,5-tetrahydrodipicolinate binding. Lys156 functions as the Proton donor in the catalytic mechanism. 162-163 (GT) contributes to the (S)-2,3,4,5-tetrahydrodipicolinate binding site.

The protein belongs to the DapB family.

It is found in the cytoplasm. The enzyme catalyses (S)-2,3,4,5-tetrahydrodipicolinate + NAD(+) + H2O = (2S,4S)-4-hydroxy-2,3,4,5-tetrahydrodipicolinate + NADH + H(+). It carries out the reaction (S)-2,3,4,5-tetrahydrodipicolinate + NADP(+) + H2O = (2S,4S)-4-hydroxy-2,3,4,5-tetrahydrodipicolinate + NADPH + H(+). The protein operates within amino-acid biosynthesis; L-lysine biosynthesis via DAP pathway; (S)-tetrahydrodipicolinate from L-aspartate: step 4/4. In terms of biological role, catalyzes the conversion of 4-hydroxy-tetrahydrodipicolinate (HTPA) to tetrahydrodipicolinate. The protein is 4-hydroxy-tetrahydrodipicolinate reductase of Listeria innocua serovar 6a (strain ATCC BAA-680 / CLIP 11262).